The chain runs to 264 residues: Tropomyosin Cha f 1.0101 (264 aa).

Met1 carries the N-acetylmethionine modification. Disordered regions lie at residues 1-56 (MDAI…VENE) and 92-126 (IQLPEEDLERSEERLNTATTKLAEASQAADESERM). Residues 1-264 (MDAIKKKMQA…RLEDELVNEK (264 aa)) adopt a coiled-coil conformation. Positions 12–45 (KLEKDNAMDRADTLEQQNKEANLRAEKTEEEIRA) are enriched in basic and acidic residues.

Belongs to the tropomyosin family. Homodimer. As to expression, expressed in muscle (at protein level). Expressed in claw muscles.

Functionally, tropomyosin, in association with the troponin complex, plays a central role in the calcium dependent regulation of muscle contraction. The protein is Tropomyosin Cha f 1.0101 of Charybdis feriata (Crucifix crab).